We begin with the raw amino-acid sequence, 153 residues long: Large ribosomal subunit protein uL15 (153 aa).

A disordered region spans residues 21-42 (RGIGSGKGKTGGRGIKGQKSRS). The span at 23-35 (IGSGKGKTGGRGI) shows a compositional bias: gly residues.

Belongs to the universal ribosomal protein uL15 family. As to quaternary structure, part of the 50S ribosomal subunit.

In terms of biological role, binds to the 23S rRNA. The polypeptide is Large ribosomal subunit protein uL15 (Rickettsia peacockii (strain Rustic)).